The chain runs to 220 residues: Glycerol-3-phosphate acyltransferase (220 aa).

Helical transmembrane passes span 11–31, 70–90, 96–116, 127–147, 153–173, and 193–213; these read INVI…GYAL, LLVL…SKLF, LQWM…FLNF, GSVV…WFFV, ISSL…FFVP, and MVLI…NLLA.

The protein belongs to the PlsY family. In terms of assembly, probably interacts with PlsX.

It is found in the cell inner membrane. The enzyme catalyses an acyl phosphate + sn-glycerol 3-phosphate = a 1-acyl-sn-glycero-3-phosphate + phosphate. It functions in the pathway lipid metabolism; phospholipid metabolism. Its function is as follows. Catalyzes the transfer of an acyl group from acyl-phosphate (acyl-PO(4)) to glycerol-3-phosphate (G3P) to form lysophosphatidic acid (LPA). This enzyme utilizes acyl-phosphate as fatty acyl donor, but not acyl-CoA or acyl-ACP. In Helicobacter pylori (strain HPAG1), this protein is Glycerol-3-phosphate acyltransferase.